We begin with the raw amino-acid sequence, 287 residues long: Shikimate dehydrogenase (NADP(+)) (287 aa).

Residues 20–22 and Thr-67 each bind shikimate; that span reads SRS. Lys-71 serves as the catalytic Proton acceptor. Glu-84 is an NADP(+) binding site. The shikimate site is built by Asn-93 and Asp-108. NADP(+) is bound by residues 132–136, 156–161, and Met-226; these read GAGGA and NRTAAR. Shikimate is bound at residue Tyr-228. Gly-250 is an NADP(+) binding site.

Belongs to the shikimate dehydrogenase family. In terms of assembly, homodimer.

It carries out the reaction shikimate + NADP(+) = 3-dehydroshikimate + NADPH + H(+). It functions in the pathway metabolic intermediate biosynthesis; chorismate biosynthesis; chorismate from D-erythrose 4-phosphate and phosphoenolpyruvate: step 4/7. Involved in the biosynthesis of the chorismate, which leads to the biosynthesis of aromatic amino acids. Catalyzes the reversible NADPH linked reduction of 3-dehydroshikimate (DHSA) to yield shikimate (SA). The chain is Shikimate dehydrogenase (NADP(+)) from Bordetella parapertussis (strain 12822 / ATCC BAA-587 / NCTC 13253).